The sequence spans 649 residues: MSRMTLKSSMKKRVLSLLIAVVFLSLTGVFPSGLIETKVSAAKITENYQFDSRIRLNSIGFIPNHSKKATIAANCSTFYVVKEDGTIVYTGTATSMFDNDTKETVYIADFSSVNEEGTYYLAVPGVGKSVNFKIAMNVYEDAFKTAMLGMYLLRCGTSVSATYNGIHYSHGPCHTNDAYLDYINGQHTKKDSTKGWHDAGDYNKYVVNAGITVGSMFLAWEHFKDQLEPVALEIPEKNNSIPDFLDELKYEIDWILTMQYPDGSGRVAHKVSTRNFGGFIMPENEHDERFFVPWSSAATADFVAMTAMAARIFRPYDPQYAEKCINAAKVSYEFLKNNPANVFANQSGFSTGEYATVSDADDRLWAAAEMWETLGDEEYLRDFENRAAQFSKKIEADFDWDNVANLGMFTYLLSERPGKNPALVQSIKDSLLSTADSIVRTSQNHGYGRTLGTTYYWGCNGTVVRQTMILQVANKISPNNDYVNAALDAISHVFGRNYYNRSYVTGLGINPPMNPHDRRSGADGIWEPWPGYLVGGGWPGPKDWVDIQDSYQTNEIAINWNAALIYALAGFVNYNSAQNEVLYGDVNDDGKVNSTDLTLLKRYVLKAVSTLPSSKAEKNADVNRDGRVNSSDVTILSRYLIRVIEKLPI.

Positions 1 to 41 (MSRMTLKSSMKKRVLSLLIAVVFLSLTGVFPSGLIETKVSA) are cleaved as a signal peptide. Residue D201 is the Nucleophile of the active site. Active-site residues include H516 and D546. Catalysis depends on E555, which acts as the Proton donor. In terms of domain architecture, Dockerin spans 579-649 (NEVLYGDVND…LIRVIEKLPI (71 aa)).

It belongs to the glycosyl hydrolase 9 (cellulase E) family. Requires Ca(2+) as cofactor.

The enzyme catalyses Endohydrolysis of (1-&gt;4)-beta-D-glucosidic linkages in cellulose, lichenin and cereal beta-D-glucans.. In terms of biological role, this enzyme catalyzes the endohydrolysis of 1,4-beta-glucosidic linkages in cellulose, lichenin and cereal beta-D-glucans. The sequence is that of Endoglucanase D (celD) from Acetivibrio thermocellus (strain ATCC 27405 / DSM 1237 / JCM 9322 / NBRC 103400 / NCIMB 10682 / NRRL B-4536 / VPI 7372) (Clostridium thermocellum).